The primary structure comprises 459 residues: Bifunctional protein GlmU (459 aa).

Residues methionine 1–arginine 230 form a pyrophosphorylase region. Residues leucine 9–glycine 12, lysine 23, glutamine 73, glycine 78–threonine 79, serine 101–aspartate 103, glycine 140, glutamate 155, asparagine 170, and asparagine 228 contribute to the UDP-N-acetyl-alpha-D-glucosamine site. Aspartate 103 is a binding site for Mg(2+). Asparagine 228 contributes to the Mg(2+) binding site. A linker region spans residues valine 231–aspartate 251. Positions glycine 252–aspartate 459 are N-acetyltransferase. Residues arginine 333 and lysine 351 each contribute to the UDP-N-acetyl-alpha-D-glucosamine site. Residue histidine 363 is the Proton acceptor of the active site. Residues tyrosine 366 and asparagine 377 each coordinate UDP-N-acetyl-alpha-D-glucosamine. Acetyl-CoA-binding positions include asparagine 386–tyrosine 387, serine 405, alanine 423, and arginine 440.

In the N-terminal section; belongs to the N-acetylglucosamine-1-phosphate uridyltransferase family. This sequence in the C-terminal section; belongs to the transferase hexapeptide repeat family. Homotrimer. The cofactor is Mg(2+).

The protein resides in the cytoplasm. It carries out the reaction alpha-D-glucosamine 1-phosphate + acetyl-CoA = N-acetyl-alpha-D-glucosamine 1-phosphate + CoA + H(+). It catalyses the reaction N-acetyl-alpha-D-glucosamine 1-phosphate + UTP + H(+) = UDP-N-acetyl-alpha-D-glucosamine + diphosphate. The protein operates within nucleotide-sugar biosynthesis; UDP-N-acetyl-alpha-D-glucosamine biosynthesis; N-acetyl-alpha-D-glucosamine 1-phosphate from alpha-D-glucosamine 6-phosphate (route II): step 2/2. Its pathway is nucleotide-sugar biosynthesis; UDP-N-acetyl-alpha-D-glucosamine biosynthesis; UDP-N-acetyl-alpha-D-glucosamine from N-acetyl-alpha-D-glucosamine 1-phosphate: step 1/1. It functions in the pathway bacterial outer membrane biogenesis; LPS lipid A biosynthesis. In terms of biological role, catalyzes the last two sequential reactions in the de novo biosynthetic pathway for UDP-N-acetylglucosamine (UDP-GlcNAc). The C-terminal domain catalyzes the transfer of acetyl group from acetyl coenzyme A to glucosamine-1-phosphate (GlcN-1-P) to produce N-acetylglucosamine-1-phosphate (GlcNAc-1-P), which is converted into UDP-GlcNAc by the transfer of uridine 5-monophosphate (from uridine 5-triphosphate), a reaction catalyzed by the N-terminal domain. The protein is Bifunctional protein GlmU of Levilactobacillus brevis (strain ATCC 367 / BCRC 12310 / CIP 105137 / JCM 1170 / LMG 11437 / NCIMB 947 / NCTC 947) (Lactobacillus brevis).